A 364-amino-acid polypeptide reads, in one-letter code: tRNA N6-adenosine threonylcarbamoyltransferase (364 aa).

Fe cation is bound by residues H115 and H119. Residues 137-141, D170, G183, and N288 each bind substrate; that span reads LVSGG. D316 lines the Fe cation pocket. Residues 341–364 are disordered; sequence PRSRWPLDEKSAPLIGTGRRGTKA.

The protein belongs to the KAE1 / TsaD family. Fe(2+) serves as cofactor.

The protein resides in the cytoplasm. The enzyme catalyses L-threonylcarbamoyladenylate + adenosine(37) in tRNA = N(6)-L-threonylcarbamoyladenosine(37) in tRNA + AMP + H(+). Required for the formation of a threonylcarbamoyl group on adenosine at position 37 (t(6)A37) in tRNAs that read codons beginning with adenine. Is involved in the transfer of the threonylcarbamoyl moiety of threonylcarbamoyl-AMP (TC-AMP) to the N6 group of A37, together with TsaE and TsaB. TsaD likely plays a direct catalytic role in this reaction. This Bartonella henselae (strain ATCC 49882 / DSM 28221 / CCUG 30454 / Houston 1) (Rochalimaea henselae) protein is tRNA N6-adenosine threonylcarbamoyltransferase.